The chain runs to 429 residues: Enolase 1 (429 aa).

Glutamine 163 provides a ligand contact to (2R)-2-phosphoglycerate. Glutamate 205 (proton donor) is an active-site residue. Residues aspartate 242, glutamate 287, and aspartate 314 each contribute to the Mg(2+) site. The (2R)-2-phosphoglycerate site is built by lysine 339, arginine 368, serine 369, and lysine 390. Lysine 339 functions as the Proton acceptor in the catalytic mechanism.

This sequence belongs to the enolase family. Mg(2+) is required as a cofactor.

The protein resides in the cytoplasm. The protein localises to the secreted. Its subcellular location is the cell surface. It carries out the reaction (2R)-2-phosphoglycerate = phosphoenolpyruvate + H2O. The protein operates within carbohydrate degradation; glycolysis; pyruvate from D-glyceraldehyde 3-phosphate: step 4/5. Its function is as follows. Catalyzes the reversible conversion of 2-phosphoglycerate (2-PG) into phosphoenolpyruvate (PEP). It is essential for the degradation of carbohydrates via glycolysis. The protein is Enolase 1 of Cupriavidus metallidurans (strain ATCC 43123 / DSM 2839 / NBRC 102507 / CH34) (Ralstonia metallidurans).